A 76-amino-acid chain; its full sequence is Protein OPG128 (76 aa).

A disulfide bond links Cys17 and Cys21.

This sequence belongs to the orthopoxvirus OPG128 family. In terms of assembly, interacts with sulfhydryl oxidase OPG072; this interaction involves formation of a transient disulfide-bonded intermediate, allowing disulfide bond transfer. Interacts with OPG088; this interaction involves formation of a transient disulfide-bonded intermediate, allowing disulfide bond transfer.

Functionally, late protein which probably participates in disulfide bond formation by functioning as a thiol-disulfide transfer protein between membrane-associated OPG072 and OPG08. The complete pathway for formation of disulfide bonds in intracellular virion membrane proteins sequentially involves oxidation of OPG072, OPG128 and OPG08. This Homo sapiens (Human) protein is Protein OPG128 (OPG128).